Reading from the N-terminus, the 578-residue chain is Protein RIK (578 aa).

A disordered region spans residues 1–34 (MTEDNDEARVPLSDSSTTNDASRTRQRRKRKWDK). Positions 206-273 (SSNVAARIRG…KSIDDAKRLA (68 aa)) constitute a KH domain. Residues 413 to 425 (ATSLSIPSDNASN) are compositionally biased toward polar residues. The tract at residues 413-578 (ATSLSIPSDN…DPDEPLTTRS (166 aa)) is disordered. Positions 472–492 (PPSPRSVMPPPPPKTIAPPPS) are enriched in pro residues. Low complexity-rich tracts occupy residues 493 to 503 (KTMSPPSSKSM) and 510 to 521 (SKTMSPLSSKSM). Acidic residues predominate over residues 560 to 572 (YGDDEDDDDDPDE).

As to quaternary structure, interacts with AS1. As to expression, expressed in vegetative tissues.

The protein resides in the nucleus. The sequence is that of Protein RIK (RIK) from Arabidopsis thaliana (Mouse-ear cress).